A 377-amino-acid chain; its full sequence is uncharacterized protein (377 aa).

A helical membrane pass occupies residues 21 to 43 (YFISFSALFLIAYMFVAAVPLGA).

The protein resides in the membrane. This is an uncharacterized protein from Treponema pallidum (strain Nichols).